Here is a 206-residue protein sequence, read N- to C-terminus: MLKKLDSLLSAAGIELPDQQKHQLIGYVELLDKWNKAYNLTSVRDPMQMLVRHILDSIVVNPHLQGSRFIDVGTGPGLPGIPLAIVRPDAHFVLLDSLGKRVRFLRQVQHELGLSNIEPVQSRVEDFAAKPPFDGVISRAFASLQDMLSWCHHLPAKPEGRFYALKGVRPDDELATLPEGIVVESVVRLRVPELDGERHLVILKSN.

Residues G73, L78, 124–125, and R139 contribute to the S-adenosyl-L-methionine site; that span reads VE.

Belongs to the methyltransferase superfamily. RNA methyltransferase RsmG family.

The protein resides in the cytoplasm. It carries out the reaction guanosine(527) in 16S rRNA + S-adenosyl-L-methionine = N(7)-methylguanosine(527) in 16S rRNA + S-adenosyl-L-homocysteine. Its function is as follows. Specifically methylates the N7 position of guanine in position 527 of 16S rRNA. The chain is Ribosomal RNA small subunit methyltransferase G from Yersinia enterocolitica serotype O:8 / biotype 1B (strain NCTC 13174 / 8081).